Here is a 358-residue protein sequence, read N- to C-terminus: Photosystem II protein D1 (358 aa).

Helical transmembrane passes span 29 to 46, 116 to 131, and 140 to 154; these read YVGW…AATI, HFLI…QWEL, and WICV…AATS. His116 provides a ligand contact to chlorophyll a. A pheophytin a-binding site is contributed by Trp124. [CaMn4O5] cluster-binding residues include Asp168 and Glu187. The chain crosses the membrane as a helical span at residues 195 to 216; sequence FHQLGVAGVFGGSLFCAMHGSL. Chlorophyll a is bound at residue His196. A quinone is bound by residues His213 and 262-263; that span reads SF. His213 is a binding site for Fe cation. His270 is a Fe cation binding site. A helical membrane pass occupies residues 272-286; the sequence is FLAAWPVVCIWFTAL. Positions 330, 331, 340, and 342 each coordinate [CaMn4O5] cluster. The propeptide occupies 343 to 358; sequence AGEVLPIALQSPAING.

It belongs to the reaction center PufL/M/PsbA/D family. In terms of assembly, PSII is composed of 1 copy each of membrane proteins PsbA, PsbB, PsbC, PsbD, PsbE, PsbF, PsbH, PsbI, PsbJ, PsbK, PsbL, PsbM, PsbT, PsbX, PsbY, PsbZ, Psb30/Ycf12, peripheral proteins PsbO, CyanoQ (PsbQ), PsbU, PsbV and a large number of cofactors. It forms dimeric complexes. The cofactor is The D1/D2 heterodimer binds P680, chlorophylls that are the primary electron donor of PSII, and subsequent electron acceptors. It shares a non-heme iron and each subunit binds pheophytin, quinone, additional chlorophylls, carotenoids and lipids. D1 provides most of the ligands for the Mn4-Ca-O5 cluster of the oxygen-evolving complex (OEC). There is also a Cl(-1) ion associated with D1 and D2, which is required for oxygen evolution. The PSII complex binds additional chlorophylls, carotenoids and specific lipids.. Tyr-159 forms a radical intermediate that is referred to as redox-active TyrZ, YZ or Y-Z. In terms of processing, C-terminally processed by CtpA; processing is essential to allow assembly of the oxygen-evolving complex and thus photosynthetic growth.

The protein localises to the cellular thylakoid membrane. The catalysed reaction is 2 a plastoquinone + 4 hnu + 2 H2O = 2 a plastoquinol + O2. Its function is as follows. Photosystem II (PSII) is a light-driven water:plastoquinone oxidoreductase that uses light energy to abstract electrons from H(2)O, generating O(2) and a proton gradient subsequently used for ATP formation. It consists of a core antenna complex that captures photons, and an electron transfer chain that converts photonic excitation into a charge separation. The D1/D2 (PsbA/PsbD) reaction center heterodimer binds P680, the primary electron donor of PSII as well as several subsequent electron acceptors. The sequence is that of Photosystem II protein D1 from Mastigocladus laminosus (Fischerella sp.).